A 248-amino-acid polypeptide reads, in one-letter code: Ribosomal RNA small subunit methyltransferase J (248 aa).

S-adenosyl-L-methionine is bound by residues 101–102 (RD), 117–118 (ER), 153–154 (SS), and Asp171.

The protein belongs to the methyltransferase superfamily. RsmJ family.

The protein localises to the cytoplasm. It carries out the reaction guanosine(1516) in 16S rRNA + S-adenosyl-L-methionine = N(2)-methylguanosine(1516) in 16S rRNA + S-adenosyl-L-homocysteine + H(+). Functionally, specifically methylates the guanosine in position 1516 of 16S rRNA. The sequence is that of Ribosomal RNA small subunit methyltransferase J from Proteus mirabilis (strain HI4320).